An 85-amino-acid polypeptide reads, in one-letter code: Small ribosomal subunit protein bS18 (85 aa).

It belongs to the bacterial ribosomal protein bS18 family. In terms of assembly, part of the 30S ribosomal subunit. Forms a tight heterodimer with protein bS6.

Its function is as follows. Binds as a heterodimer with protein bS6 to the central domain of the 16S rRNA, where it helps stabilize the platform of the 30S subunit. In Helicobacter pylori (strain Shi470), this protein is Small ribosomal subunit protein bS18.